The primary structure comprises 236 residues: Small ribosomal subunit protein uS2c (236 aa).

Belongs to the universal ribosomal protein uS2 family.

Its subcellular location is the plastid. It is found in the chloroplast. The protein is Small ribosomal subunit protein uS2c (rps2) of Nandina domestica (Heavenly bamboo).